The sequence spans 317 residues: Protein-methionine-sulfoxide reductase catalytic subunit MsrP (317 aa).

The segment at residues 1-40 (MKKLTSNDVTPEEIFYQRRKIIKAFGLSAVATALPTFSFA) is a signal peptide (tat-type signal). Residues N71, 74 to 75 (YE), C129, T164, N216, R221, and 232 to 234 (SIK) each bind Mo-molybdopterin.

The protein belongs to the MsrP family. As to quaternary structure, heterodimer of a catalytic subunit (MsrP) and a heme-binding subunit (MsrQ). The cofactor is Mo-molybdopterin. Predicted to be exported by the Tat system. The position of the signal peptide cleavage has not been experimentally proven.

It localises to the periplasm. It carries out the reaction L-methionyl-[protein] + a quinone + H2O = L-methionyl-(S)-S-oxide-[protein] + a quinol. The catalysed reaction is L-methionyl-[protein] + a quinone + H2O = L-methionyl-(R)-S-oxide-[protein] + a quinol. Functionally, part of the MsrPQ system that repairs oxidized periplasmic proteins containing methionine sulfoxide residues (Met-O), using respiratory chain electrons. Thus protects these proteins from oxidative-stress damage caused by reactive species of oxygen and chlorine generated by the host defense mechanisms. MsrPQ is essential for the maintenance of envelope integrity under bleach stress, rescuing a wide series of structurally unrelated periplasmic proteins from methionine oxidation. The catalytic subunit MsrP is non-stereospecific, being able to reduce both (R-) and (S-) diastereoisomers of methionine sulfoxide. This Histophilus somni (strain 2336) (Haemophilus somnus) protein is Protein-methionine-sulfoxide reductase catalytic subunit MsrP.